The following is a 190-amino-acid chain: B3 domain-containing protein At4g01580 (190 aa).

The interval methionine 1–serine 25 is disordered. Polar residues predominate over residues threonine 12–proline 23. The TF-B3 DNA-binding region spans lysine 29–serine 122.

The protein resides in the nucleus. The polypeptide is B3 domain-containing protein At4g01580 (Arabidopsis thaliana (Mouse-ear cress)).